We begin with the raw amino-acid sequence, 665 residues long: Syntabulin (665 aa).

A compositionally biased stretch (basic and acidic residues) spans 1-22; the sequence is MGPLRESKKEQRVQHQEKEISR. A disordered region spans residues 1–271; the sequence is MGPLRESKKE…GVKPPNPEQY (271 aa). A sufficient for interaction with KIF5B region spans residues 2-421; it reads GPLRESKKEQ…DKLPDGLSLE (420 aa). Residues 35–52 show a composition bias toward low complexity; that stretch reads PQQQQQQQNKVSPASESP. Ser54 bears the Phosphoserine mark. Residues 61–77 show a composition bias toward low complexity; sequence FNPSSSGRSARTISSNS. The span at 85 to 101 shows a compositional bias: polar residues; sequence CPSSQSVSPVKTPSDTG. Ser111 carries the post-translational modification Phosphoserine. Positions 141-162 are enriched in low complexity; sequence GGIIKPGSEADFSSSSSTGSIS. Residues 168 to 180 show a composition bias toward polar residues; sequence MSTTGNKRASFSR. The span at 225–245 shows a compositional bias: low complexity; it reads SYAPSSPSSSNSGSYKGSDCS. Residues 275 to 357 adopt a coiled-coil conformation; sequence LQQKEVTVRH…MRSSLADKDK (83 aa). The interval 314–421 is sufficient for interaction with STX1A; sequence REDWIEEECH…DKLPDGLSLE (108 aa). Phosphoserine occurs at positions 400 and 557. Residues 609–629 traverse the membrane as a helical segment; it reads FLVDLLAVAAPVVPTVLWAFS.

Interacts with STX1A and KIF5B.

It localises to the golgi apparatus membrane. Part of a kinesin motor-adapter complex that is critical for the anterograde axonal transport of active zone components and contributes to activity-dependent presynaptic assembly during neuronal development. The chain is Syntabulin (Sybu) from Mus musculus (Mouse).